We begin with the raw amino-acid sequence, 555 residues long: Prespore protein Dp87 (555 aa).

An N-terminal signal peptide occupies residues 1–22 (MRILYLASLLFLITLYLSPTFG). Positions 27-144 (RDCESHRSEY…RIPRCVGHHG (118 aa)) constitute a DSCP-N domain. N-linked (GlcNAc...) asparagine glycosylation is present at asparagine 103. Follistatin-like domains follow at residues 148 to 170 (KCDR…ACCV), 175 to 197 (GCGN…CRCV), 209 to 231 (QCRN…ATCV), 240 to 262 (LCRG…PVCV), 276 to 298 (ICGS…PTCI), 304 to 327 (LCNQ…VKCS), 332 to 354 (ECKW…PHCL), and 362 to 384 (LCKV…PTCI). Asparagine 306 carries N-linked (GlcNAc...) asparagine glycosylation. A glycan (N-linked (GlcNAc...) asparagine) is linked at asparagine 418. The tract at residues 454–555 (TTSATTAGTT…ESSESSSATS (102 aa)) is disordered. Over residues 470–555 (GGSTSDSSAA…ESSESSSATS (86 aa)) the composition is skewed to low complexity.

The protein resides in the spore wall. In Dictyostelium discoideum (Social amoeba), this protein is Prespore protein Dp87 (cotD).